We begin with the raw amino-acid sequence, 698 residues long: DNA ligase (698 aa).

Residues 47 to 51 (DAQYD), 96 to 97 (SL), and Glu128 each bind NAD(+). The N6-AMP-lysine intermediate role is filled by Lys130. 4 residues coordinate NAD(+): Arg151, Glu186, Lys303, and Lys327. Zn(2+)-binding residues include Cys422, Cys425, Cys440, and Cys446. Residues 620–698 (GDNLLLSNQT…EEEWIKMVNE (79 aa)) form the BRCT domain.

This sequence belongs to the NAD-dependent DNA ligase family. LigA subfamily. The cofactor is Mg(2+). It depends on Mn(2+) as a cofactor.

The catalysed reaction is NAD(+) + (deoxyribonucleotide)n-3'-hydroxyl + 5'-phospho-(deoxyribonucleotide)m = (deoxyribonucleotide)n+m + AMP + beta-nicotinamide D-nucleotide.. Functionally, DNA ligase that catalyzes the formation of phosphodiester linkages between 5'-phosphoryl and 3'-hydroxyl groups in double-stranded DNA using NAD as a coenzyme and as the energy source for the reaction. It is essential for DNA replication and repair of damaged DNA. This is DNA ligase from Orientia tsutsugamushi (strain Boryong) (Rickettsia tsutsugamushi).